Reading from the N-terminus, the 479-residue chain is Sulfate adenylyltransferase subunit 1 (479 aa).

The 217-residue stretch at 22–238 (KDMLRFLTCG…DSMDISKEPK (217 aa)) folds into the tr-type G domain. Residues 31–38 (GSVDDGKS) are G1. 31 to 38 (GSVDDGKS) contacts GTP. A G2 region spans residues 89–93 (GITID). Residues 110 to 113 (DTPG) are G3. GTP-binding positions include 110–114 (DTPGH) and 165–168 (NKMD). Residues 165-168 (NKMD) form a G4 region. The G5 stretch occupies residues 202 to 204 (SAL).

The protein belongs to the TRAFAC class translation factor GTPase superfamily. Classic translation factor GTPase family. CysN/NodQ subfamily. As to quaternary structure, heterodimer composed of CysD, the smaller subunit, and CysN.

It carries out the reaction sulfate + ATP + H(+) = adenosine 5'-phosphosulfate + diphosphate. It participates in sulfur metabolism; hydrogen sulfide biosynthesis; sulfite from sulfate: step 1/3. In terms of biological role, with CysD forms the ATP sulfurylase (ATPS) that catalyzes the adenylation of sulfate producing adenosine 5'-phosphosulfate (APS) and diphosphate, the first enzymatic step in sulfur assimilation pathway. APS synthesis involves the formation of a high-energy phosphoric-sulfuric acid anhydride bond driven by GTP hydrolysis by CysN coupled to ATP hydrolysis by CysD. The chain is Sulfate adenylyltransferase subunit 1 from Sulfurovum sp. (strain NBC37-1).